The following is a 187-amino-acid chain: Protein Flattop (187 aa).

The disordered stretch occupies residues 97 to 187; that stretch reads THSGHGIHTH…TPQLEREEPQ (91 aa). A compositionally biased stretch (polar residues) spans 122-131; sequence EGDQTCNAPT. The span at 169–187 shows a compositional bias: basic and acidic residues; it reads KRREQSLEETPQLEREEPQ.

It belongs to the Flattop family.

It is found in the cytoplasm. The protein resides in the cytoskeleton. The protein localises to the cilium basal body. It localises to the cell projection. Its subcellular location is the cilium. It is found in the apical cell membrane. The protein resides in the cilium axoneme. Functionally, microtubule inner protein (MIP) part of the dynein-decorated doublet microtubules (DMTs) in cilia axoneme. Acts as a regulator of cilium basal body docking and positioning in mono- and multiciliated cells. Regulates basal body docking and cilia formation in multiciliated lung cells. Regulates kinocilium positioning and stereocilia bundle morphogenesis in the inner ear. In Salmo salar (Atlantic salmon), this protein is Protein Flattop.